We begin with the raw amino-acid sequence, 154 residues long: Nucleoside diphosphate kinase (154 aa).

The ATP site is built by lysine 12, phenylalanine 60, arginine 88, threonine 94, arginine 105, and asparagine 115. The active-site Pros-phosphohistidine intermediate is histidine 118.

This sequence belongs to the NDK family. Requires Mg(2+) as cofactor.

It localises to the cytoplasm. It catalyses the reaction a 2'-deoxyribonucleoside 5'-diphosphate + ATP = a 2'-deoxyribonucleoside 5'-triphosphate + ADP. It carries out the reaction a ribonucleoside 5'-diphosphate + ATP = a ribonucleoside 5'-triphosphate + ADP. In terms of biological role, major role in the synthesis of nucleoside triphosphates other than ATP. The ATP gamma phosphate is transferred to the NDP beta phosphate via a ping-pong mechanism, using a phosphorylated active-site intermediate. The polypeptide is Nucleoside diphosphate kinase (Haloarcula marismortui (strain ATCC 43049 / DSM 3752 / JCM 8966 / VKM B-1809) (Halobacterium marismortui)).